A 240-amino-acid polypeptide reads, in one-letter code: uncharacterized protein (240 aa).

This sequence to H.influenzae HI_0575.

This is an uncharacterized protein from Escherichia coli (strain K12).